A 419-amino-acid polypeptide reads, in one-letter code: Innexin inx5 (419 aa).

The Cytoplasmic portion of the chain corresponds to 1 to 21 (MFSAVKPLSKYLQFKSIRIYD). A helical transmembrane segment spans residues 22–42 (SVFTIHSRCTVVILLTCSLLL). At 43–162 (SARQYFGDPI…QTERQYLRYY (120 aa)) the chain is on the extracellular side. The chain crosses the membrane as a helical span at residues 163–183 (QWVIILLLFQSFVFYFPSCLW). Residues 184–238 (KVWEGRRLKQLCSEVGDALLSEETYNTRLRMLVKYFTTDYEDMHFCYMAKYVFCE) lie on the Cytoplasmic side of the membrane. Residues 239 to 259 (VLNFLISVVNIIVLEVFLNGF) traverse the membrane as a helical segment. Residues 260 to 320 (WSKYLRALAT…ILPLNILNEK (61 aa)) lie on the Extracellular side of the membrane. A helical transmembrane segment spans residues 321–341 (IFVFLWAWFLLMALMSGLNLL). Over 342–419 (CRLAMICSRY…ASGSTLESPV (78 aa)) the chain is Cytoplasmic.

It belongs to the pannexin family. In terms of tissue distribution, expressed in the cortex of the pupal CNS and at low levels in the wing imaginal disk.

It localises to the cell membrane. The protein resides in the cell junction. Its subcellular location is the gap junction. Functionally, structural component of the gap junctions. The polypeptide is Innexin inx5 (Inx5) (Drosophila melanogaster (Fruit fly)).